The sequence spans 376 residues: Metal tolerance protein 6 (376 aa).

The segment at methionine 1–glycine 28 is disordered. At methionine 1–leucine 123 the chain is on the cytoplasmic side. A helical membrane pass occupies residues alanine 124–isoleucine 144. The Vacuolar portion of the chain corresponds to arginine 145–leucine 149. Residues alanine 150 to phenylalanine 170 form a helical membrane-spanning segment. The Cytoplasmic portion of the chain corresponds to threonine 171–glutamine 191. A helical membrane pass occupies residues proline 192–glutamate 212. Residues serine 213 to glutamate 231 lie on the Vacuolar side of the membrane. The chain crosses the membrane as a helical span at residues lysine 232–cysteine 252. Topologically, residues arginine 253–leucine 376 are cytoplasmic.

This sequence belongs to the cation diffusion facilitator (CDF) transporter (TC 2.A.4) family. SLC30A subfamily.

The protein localises to the vacuole membrane. Functionally, involved in sequestration of excess metal in the cytoplasm into vacuoles to maintain metal homeostasis. This is Metal tolerance protein 6 (MTP6) from Oryza sativa subsp. japonica (Rice).